Consider the following 201-residue polypeptide: Large ribosomal subunit protein uL4 (201 aa).

The tract at residues 45–72 (AQKTRAEVTGSGKKPWRQKGTGRARAGS) is disordered.

Belongs to the universal ribosomal protein uL4 family. In terms of assembly, part of the 50S ribosomal subunit.

In terms of biological role, one of the primary rRNA binding proteins, this protein initially binds near the 5'-end of the 23S rRNA. It is important during the early stages of 50S assembly. It makes multiple contacts with different domains of the 23S rRNA in the assembled 50S subunit and ribosome. Its function is as follows. Forms part of the polypeptide exit tunnel. In Shewanella baltica (strain OS223), this protein is Large ribosomal subunit protein uL4.